Reading from the N-terminus, the 101-residue chain is NADH-quinone oxidoreductase subunit K (101 aa).

The next 3 helical transmembrane spans lie at 4–24 (LEHY…GIFL), 30–50 (IVIL…LVAF), and 65–85 (FVLT…VTFF).

The protein belongs to the complex I subunit 4L family. In terms of assembly, NDH-1 is composed of 14 different subunits. Subunits NuoA, H, J, K, L, M, N constitute the membrane sector of the complex.

The protein resides in the cell inner membrane. It catalyses the reaction a quinone + NADH + 5 H(+)(in) = a quinol + NAD(+) + 4 H(+)(out). In terms of biological role, NDH-1 shuttles electrons from NADH, via FMN and iron-sulfur (Fe-S) centers, to quinones in the respiratory chain. The immediate electron acceptor for the enzyme in this species is believed to be ubiquinone. Couples the redox reaction to proton translocation (for every two electrons transferred, four hydrogen ions are translocated across the cytoplasmic membrane), and thus conserves the redox energy in a proton gradient. This chain is NADH-quinone oxidoreductase subunit K, found in Cereibacter sphaeroides (strain ATCC 17029 / ATH 2.4.9) (Rhodobacter sphaeroides).